The primary structure comprises 758 residues: Amyloid beta precursor protein binding family B member 2 (758 aa).

The residue at position 123 (Ser123) is a Phosphoserine. The tract at residues 134-154 is disordered; it reads KLEGKEPHPQDSSSCEILPSQ. At Ser160 the chain carries Phosphoserine. The span at 176-190 shows a compositional bias: basic and acidic residues; the sequence is EQNRGNHHGTAEEKS. Disordered regions lie at residues 176-195, 206-295, and 326-351; these read EQNRGNHHGTAEEKSQPVQG, LLLQ…LPPG, and DLQGSRKGSLSSVTPSPTPENEKQPW. Composition is skewed to polar residues over residues 212–230 and 261–275; these read NRPQSSPEDGQVATVSSSP and SWTTLSQDSASPSSP. The WW domain maps to 290-322; that stretch reads PDLPPGWKRVSDIAGTYYWHIPTGTTQWERPVS. The span at 331 to 340 shows a compositional bias: polar residues; that stretch reads RKGSLSSVTP. Ser334, Ser409, and Ser412 each carry phosphoserine. PID domains are found at residues 413-578 and 584-736; these read DPEA…LQVD and TELV…VTTN.

As to quaternary structure, interacts (via C-terminus) with APP (via C-terminus). Interacts with APLP2 (via cytoplasmic domain). Widely expressed.

It localises to the endoplasmic reticulum. The protein resides in the golgi apparatus. The protein localises to the early endosome. Plays a role in the maintenance of lens transparency, and may also play a role in muscle cell strength. Involved in hippocampal neurite branching and neuromuscular junction formation, as a result plays a role in spatial memory functioning. Activates transcription of APP. This is Amyloid beta precursor protein binding family B member 2 from Homo sapiens (Human).